The primary structure comprises 213 residues: MNISLRPAIAAPSPLDSFLTRHRIGIWRVVVSVVLIALITGHSQWDDTWISAALLTVGMLGVTMATVGRLWCALYISGRKSTELVTTGPYSMCRHPLYVCNFVGIVGLGAMTESITLAAILALAFALMYPAVIRSEDHLLSRNFPEFDDYARRTPAFFPRLSLFRSESTYLVHVGSFQRNLADSVWFLGMTIVVNAVELARHAKWLPTFVLLP.

Transmembrane regions (helical) follow at residues 24-44, 48-68, 113-133, and 180-200; these read IGIWRVVVSVVLIALITGHSQ, TWISAALLTVGMLGVTMATVG, ESITLAAILALAFALMYPAVI, and NLADSVWFLGMTIVVNAVELA.

The protein to A.eutrophus CzcN.

Its subcellular location is the cell inner membrane. Functionally, component of the NCC cation-efflux system that confers resistance to nickel, cobalt and cadmium. Appears to be involved in metal specificity but affects only nickel resistance. May be involved in nickel transport. The chain is Nickel-cobalt-cadmium resistance protein NccN (nccN) from Alcaligenes xylosoxydans xylosoxydans (Achromobacter xylosoxidans).